We begin with the raw amino-acid sequence, 554 residues long: Sesquiterpene synthase 14b (554 aa).

Positions 305, 309, 449, and 457 each coordinate Mg(2+). A DDXXD motif motif is present at residues 305–309 (DDLYD).

This sequence belongs to the terpene synthase family. Tpsa subfamily. Mg(2+) serves as cofactor. Mn(2+) is required as a cofactor.

It carries out the reaction (2E,6E)-farnesyl diphosphate = (E)-gamma-bisabolene + diphosphate. The catalysed reaction is (2Z,6Z)-farnesyl diphosphate = (E)-gamma-bisabolene + diphosphate. The enzyme catalyses (2Z,6Z)-farnesyl diphosphate = (E)-alpha-bisabolene + diphosphate. It catalyses the reaction (2Z,6Z)-farnesyl diphosphate = (Z)-beta-farnesene + diphosphate. It carries out the reaction (2E,6E)-farnesyl diphosphate = (E)-beta-farnesene + diphosphate. The catalysed reaction is (2E,6E)-farnesyl diphosphate = (+)-thujopsene + diphosphate. The enzyme catalyses (2Z,6Z)-farnesyl diphosphate = (E)-beta-farnesene + diphosphate. It catalyses the reaction (2E,6E)-farnesyl diphosphate = (Z)-beta-farnesene + diphosphate. It carries out the reaction (2Z,6Z)-farnesyl diphosphate = beta-acoradiene + diphosphate. The catalysed reaction is (2Z,6Z)-farnesyl diphosphate = alpha-acoradiene + diphosphate. The enzyme catalyses (2Z,6Z)-farnesyl diphosphate = beta-bisabolene + diphosphate. It catalyses the reaction (2E,6E)-farnesyl diphosphate = (-)-alpha-cedrene + diphosphate. It carries out the reaction (2E,6E)-farnesyl diphosphate = beta-bisabolene + diphosphate. The catalysed reaction is (2E,6E)-farnesyl diphosphate = beta-acoradiene + diphosphate. The enzyme catalyses (2Z,6Z)-farnesyl diphosphate = (-)-alpha-cedrene + diphosphate. It catalyses the reaction (2E)-geranyl diphosphate = terpinolene + diphosphate. It carries out the reaction (2E)-geranyl diphosphate = limonene + diphosphate. The catalysed reaction is (2E)-geranyl diphosphate = beta-myrcene + diphosphate. It functions in the pathway secondary metabolite biosynthesis; terpenoid biosynthesis. Functionally, sesquiterpene synthase involved in the biosynthesis of volatile compounds. Mediates the conversion of (2E,6E)-farnesyl diphosphate ((EE)-FPP) into (+)-thujopsene, beta-bisabolene, alpha-cederene, beta-acoradiene, (E)-gamma-bisabolene, (Z)-alpha-bisabolene, (Z)-beta-farnesene and (E)-beta-farnesene, and of (2Z,6Z)-farnesyl diphosphate ((ZZ)-FPP) into (E)-gamma-bisabolene, (E)-alpha-bisabolene, (E)-beta-farnesene, (Z)-beta-farnesene, beta-bisabolene, beta-acoradiene and alpha-acoradiene. Can act with a low efficiency as a monoterpene synthase with geranyl diphosphate (GPP) as substrate, thus producing beta-myrcene, limonene and terpinolene. The sequence is that of Sesquiterpene synthase 14b from Solanum habrochaites (Wild tomato).